A 348-amino-acid chain; its full sequence is S-adenosylmethionine:tRNA ribosyltransferase-isomerase (348 aa).

This sequence belongs to the QueA family. Monomer.

Its subcellular location is the cytoplasm. It carries out the reaction 7-aminomethyl-7-carbaguanosine(34) in tRNA + S-adenosyl-L-methionine = epoxyqueuosine(34) in tRNA + adenine + L-methionine + 2 H(+). Its pathway is tRNA modification; tRNA-queuosine biosynthesis. Functionally, transfers and isomerizes the ribose moiety from AdoMet to the 7-aminomethyl group of 7-deazaguanine (preQ1-tRNA) to give epoxyqueuosine (oQ-tRNA). The polypeptide is S-adenosylmethionine:tRNA ribosyltransferase-isomerase (Amoebophilus asiaticus (strain 5a2)).